Consider the following 709-residue polypeptide: Elongation factor G (709 aa).

The tr-type G domain maps to 6–295 (KFLRNIGIMA…AVCTYLPSPL (290 aa)). GTP-binding positions include 15-22 (AHIDAGKT), 92-96 (DTPGH), and 146-149 (NKMD).

It belongs to the TRAFAC class translation factor GTPase superfamily. Classic translation factor GTPase family. EF-G/EF-2 subfamily.

The protein resides in the cytoplasm. Catalyzes the GTP-dependent ribosomal translocation step during translation elongation. During this step, the ribosome changes from the pre-translocational (PRE) to the post-translocational (POST) state as the newly formed A-site-bound peptidyl-tRNA and P-site-bound deacylated tRNA move to the P and E sites, respectively. Catalyzes the coordinated movement of the two tRNA molecules, the mRNA and conformational changes in the ribosome. The protein is Elongation factor G of Amoebophilus asiaticus (strain 5a2).